A 509-amino-acid polypeptide reads, in one-letter code: L-arabinose isomerase (509 aa).

Residues Glu313, Glu340, His357, and His456 each coordinate Mn(2+).

The protein belongs to the arabinose isomerase family. Mn(2+) serves as cofactor.

It carries out the reaction beta-L-arabinopyranose = L-ribulose. It functions in the pathway carbohydrate degradation; L-arabinose degradation via L-ribulose; D-xylulose 5-phosphate from L-arabinose (bacterial route): step 1/3. Functionally, catalyzes the conversion of L-arabinose to L-ribulose. The sequence is that of L-arabinose isomerase from Bacteroides thetaiotaomicron (strain ATCC 29148 / DSM 2079 / JCM 5827 / CCUG 10774 / NCTC 10582 / VPI-5482 / E50).